Consider the following 275-residue polypeptide: Lacto-N-neotetraose biosynthesis glycosyltransferase LgtB (275 aa).

It belongs to the glycosyltransferase 25 family.

It participates in glycan metabolism; lacto-N-neotetraose biosynthesis. It functions in the pathway bacterial outer membrane biogenesis; lipooligosaccharide biosynthesis. In terms of biological role, adds the second galactose to the lacto-N-tetraose chain in lipooligosaccharide (LOS). This Neisseria meningitidis serogroup B (strain ATCC BAA-335 / MC58) protein is Lacto-N-neotetraose biosynthesis glycosyltransferase LgtB (lgtB).